A 326-amino-acid chain; its full sequence is Thiamine thiazole synthase (326 aa).

Substrate contacts are provided by residues Cys87, 108–109 (EA), Gly116, and Val181. Cys215 is modified (2,3-didehydroalanine (Cys)). Substrate-binding positions include Asp217, His232, Met284, and 294-296 (RMG).

Belongs to the THI4 family. Homooctamer. Fe cation is required as a cofactor. Post-translationally, during the catalytic reaction, a sulfide is transferred from Cys-215 to a reaction intermediate, generating a dehydroalanine residue.

It localises to the cytoplasm. The protein resides in the nucleus. The enzyme catalyses [ADP-thiazole synthase]-L-cysteine + glycine + NAD(+) = [ADP-thiazole synthase]-dehydroalanine + ADP-5-ethyl-4-methylthiazole-2-carboxylate + nicotinamide + 3 H2O + 2 H(+). In terms of biological role, involved in biosynthesis of the thiamine precursor thiazole. Catalyzes the conversion of NAD and glycine to adenosine diphosphate 5-(2-hydroxyethyl)-4-methylthiazole-2-carboxylic acid (ADT), an adenylated thiazole intermediate. The reaction includes an iron-dependent sulfide transfer from a conserved cysteine residue of the protein to a thiazole intermediate. The enzyme can only undergo a single turnover, which suggests it is a suicide enzyme. May have additional roles in adaptation to various stress conditions and in DNA damage tolerance. This chain is Thiamine thiazole synthase, found in Sclerotinia sclerotiorum (strain ATCC 18683 / 1980 / Ss-1) (White mold).